A 69-amino-acid polypeptide reads, in one-letter code: Disintegrin EMF10A (69 aa).

Positions 1–66 constitute a Disintegrin domain; it reads MNSANPCCDP…DCPRNPWKSE (66 aa). 4 disulfide bridges follow: cysteine 7/cysteine 30, cysteine 21/cysteine 27, cysteine 26/cysteine 51, and cysteine 39/cysteine 58. The Cell attachment site signature appears at 43–45; sequence RGD.

It belongs to the disintegrin family. Dimeric disintegrin subfamily. Heterodimer with EMF10B; disulfide-linked. Expressed by the venom gland.

Its subcellular location is the secreted. In terms of biological role, extremely potent and selective inhibitor of integrin alpha-5/beta-1 (ITGA5/ITGB1). Partially inhibits adhesion of cells expressing alpha-IIb/beta-3 (ITGA2B/ITGB3), alpha-V/beta-3 (ITGAV/ITGB3), and alpha-4/beta-1 (ITGA4/ITGB1) to appropriate ligands only at concentration higher than 500 nM. Weakly inhibits ADP-induced platelet aggregation. The polypeptide is Disintegrin EMF10A (Eristicophis macmahoni (Leaf-nosed viper)).